The primary structure comprises 138 residues: MPTINQLVRQGRKSISTKSDSPALNFGYNSKKKSLTNNPAPQKRGVATRVGTMTPKKPNSALRKYARVRLSNLIEVTAYIPGIGHNLQEHSVVLIRGGRVKDLPGVRYHIVRGALDTAGVDGRMQGRSKYGAKRPKKK.

The segment covering 1 to 22 (MPTINQLVRQGRKSISTKSDSP) has biased composition (polar residues). The interval 1 to 45 (MPTINQLVRQGRKSISTKSDSPALNFGYNSKKKSLTNNPAPQKRG) is disordered. At aspartate 102 the chain carries 3-methylthioaspartic acid.

Belongs to the universal ribosomal protein uS12 family. Part of the 30S ribosomal subunit. Contacts proteins S8 and S17. May interact with IF1 in the 30S initiation complex.

Functionally, with S4 and S5 plays an important role in translational accuracy. Interacts with and stabilizes bases of the 16S rRNA that are involved in tRNA selection in the A site and with the mRNA backbone. Located at the interface of the 30S and 50S subunits, it traverses the body of the 30S subunit contacting proteins on the other side and probably holding the rRNA structure together. The combined cluster of proteins S8, S12 and S17 appears to hold together the shoulder and platform of the 30S subunit. This Lacticaseibacillus paracasei (strain ATCC 334 / BCRC 17002 / CCUG 31169 / CIP 107868 / KCTC 3260 / NRRL B-441) (Lactobacillus paracasei) protein is Small ribosomal subunit protein uS12.